A 1204-amino-acid polypeptide reads, in one-letter code: ATP-dependent helicase/nuclease subunit A (1204 aa).

The 468-residue stretch at 2–469 (TKFTKEQNQA…IVLSDNFRST (468 aa)) folds into the UvrD-like helicase ATP-binding domain. Residue 23–30 (ASAGSGKT) participates in ATP binding. In terms of domain architecture, UvrD-like helicase C-terminal spans 496–784 (EGQLQFGATY…KLMTIHASKG (289 aa)).

This sequence belongs to the helicase family. AddA subfamily. As to quaternary structure, heterodimer of AddA and AddB/RexB. Requires Mg(2+) as cofactor.

It catalyses the reaction Couples ATP hydrolysis with the unwinding of duplex DNA by translocating in the 3'-5' direction.. It carries out the reaction ATP + H2O = ADP + phosphate + H(+). In terms of biological role, the heterodimer acts as both an ATP-dependent DNA helicase and an ATP-dependent, dual-direction single-stranded exonuclease. Recognizes the chi site generating a DNA molecule suitable for the initiation of homologous recombination. The AddA nuclease domain is required for chi fragment generation; this subunit has the helicase and 3' -&gt; 5' nuclease activities. In Lactobacillus johnsonii (strain CNCM I-12250 / La1 / NCC 533), this protein is ATP-dependent helicase/nuclease subunit A.